A 127-amino-acid chain; its full sequence is Large ribosomal subunit protein bL17 (127 aa).

This sequence belongs to the bacterial ribosomal protein bL17 family. Part of the 50S ribosomal subunit. Contacts protein L32.

This is Large ribosomal subunit protein bL17 from Alcanivorax borkumensis (strain ATCC 700651 / DSM 11573 / NCIMB 13689 / SK2).